The following is a 109-amino-acid chain: Thioredoxin (109 aa).

Positions 2-109 (ETLLWKDARE…LVEKIKELFK (108 aa)) constitute a Thioredoxin domain. Cysteine 27 and cysteine 30 are oxidised to a cystine.

Belongs to the thioredoxin family.

In terms of biological role, participates in various redox reactions through the reversible oxidation of its active center dithiol to a disulfide and catalyzes dithiol-disulfide exchange reactions. The sequence is that of Thioredoxin (trxA) from Mycoplasmopsis pulmonis (strain UAB CTIP) (Mycoplasma pulmonis).